A 143-amino-acid polypeptide reads, in one-letter code: MKTFLTEQQIKVLVLRAKGLKQSEIAKILKTTRANVSILEKRALEKIEKAKNTLLLWEQINSKVNVNVKAGEDIFSVPEKLFKKADEAGVKVPYSTAEIIAFLVEHAPIENRLAKRDFVIFLDSKNRLRISDCLINLDEIEKK.

This sequence belongs to the Tfx family.

In terms of biological role, putative transcriptional regulator. The polypeptide is Putative transcriptional regulatory protein PH0763 (Pyrococcus horikoshii (strain ATCC 700860 / DSM 12428 / JCM 9974 / NBRC 100139 / OT-3)).